A 240-amino-acid chain; its full sequence is Large ribosomal subunit protein bL25 (240 aa).

Residues 1–24 form a disordered region; sequence MATVMEFKATARPKSGKGAARAER.

This sequence belongs to the bacterial ribosomal protein bL25 family. CTC subfamily. Part of the 50S ribosomal subunit; part of the 5S rRNA/L5/L18/L25 subcomplex. Contacts the 5S rRNA. Binds to the 5S rRNA independently of L5 and L18.

Its function is as follows. This is one of the proteins that binds to the 5S RNA in the ribosome where it forms part of the central protuberance. The chain is Large ribosomal subunit protein bL25 from Rhodopseudomonas palustris (strain HaA2).